We begin with the raw amino-acid sequence, 93 residues long: Acylphosphatase (93 aa).

In terms of domain architecture, Acylphosphatase-like spans 7-93; it reads RAHVFVSGTV…EGIDGFHIRR (87 aa). Residues Arg22 and Asn40 contribute to the active site.

The protein belongs to the acylphosphatase family.

It catalyses the reaction an acyl phosphate + H2O = a carboxylate + phosphate + H(+). The sequence is that of Acylphosphatase (acyP) from Haloquadratum walsbyi (strain DSM 16790 / HBSQ001).